The primary structure comprises 1102 residues: Carbamoyl phosphate synthase large chain (1102 aa).

A carboxyphosphate synthetic domain region spans residues 1–408; sequence MPKRTDIQSV…ALQKALRSLE (408 aa). ATP contacts are provided by Arg-129, Arg-175, Gly-181, Gly-182, Glu-214, Ile-216, Glu-221, Gly-247, Val-248, His-249, Gln-291, and Glu-305. In terms of domain architecture, ATP-grasp 1 spans 138–334; the sequence is AVRAKIGHGE…IAKIAAKLAV (197 aa). Residues Gln-291, Glu-305, and Asn-307 each coordinate Mg(2+). Residues Gln-291, Glu-305, and Asn-307 each coordinate Mn(2+). Residues 409 to 551 are oligomerization domain; that stretch reads KKGSQFTFVG…YFYSSYDEES (143 aa). A carbamoyl phosphate synthetic domain region spans residues 552–954; the sequence is EVAPREKPAV…AYAKSQAGAY (403 aa). The ATP-grasp 2 domain occupies 682–873; sequence GQVLAEAGLP…LAKAAARISL (192 aa). 10 residues coordinate ATP: Arg-718, Arg-757, Leu-759, Glu-764, Gly-789, Ile-790, His-791, Ser-792, Gln-832, and Glu-844. Residues Gln-832, Glu-844, and Asn-846 each coordinate Mg(2+). Residues Gln-832, Glu-844, and Asn-846 each contribute to the Mn(2+) site. In terms of domain architecture, MGS-like spans 955-1100; sequence GPLPTKGRAF…QEHAEHLTAA (146 aa). The segment at 955 to 1102 is allosteric domain; it reads GPLPTKGRAF…HAEHLTAARD (148 aa).

Belongs to the CarB family. As to quaternary structure, composed of two chains; the small (or glutamine) chain promotes the hydrolysis of glutamine to ammonia, which is used by the large (or ammonia) chain to synthesize carbamoyl phosphate. Tetramer of heterodimers (alpha,beta)4. Requires Mg(2+) as cofactor. Mn(2+) is required as a cofactor.

The catalysed reaction is hydrogencarbonate + L-glutamine + 2 ATP + H2O = carbamoyl phosphate + L-glutamate + 2 ADP + phosphate + 2 H(+). The enzyme catalyses hydrogencarbonate + NH4(+) + 2 ATP = carbamoyl phosphate + 2 ADP + phosphate + 2 H(+). The protein operates within amino-acid biosynthesis; L-arginine biosynthesis; carbamoyl phosphate from bicarbonate: step 1/1. It functions in the pathway pyrimidine metabolism; UMP biosynthesis via de novo pathway; (S)-dihydroorotate from bicarbonate: step 1/3. Large subunit of the glutamine-dependent carbamoyl phosphate synthetase (CPSase). CPSase catalyzes the formation of carbamoyl phosphate from the ammonia moiety of glutamine, carbonate, and phosphate donated by ATP, constituting the first step of 2 biosynthetic pathways, one leading to arginine and/or urea and the other to pyrimidine nucleotides. The large subunit (synthetase) binds the substrates ammonia (free or transferred from glutamine from the small subunit), hydrogencarbonate and ATP and carries out an ATP-coupled ligase reaction, activating hydrogencarbonate by forming carboxy phosphate which reacts with ammonia to form carbamoyl phosphate. This is Carbamoyl phosphate synthase large chain from Streptomyces avermitilis (strain ATCC 31267 / DSM 46492 / JCM 5070 / NBRC 14893 / NCIMB 12804 / NRRL 8165 / MA-4680).